The sequence spans 21 residues: Large ribosomal subunit protein uL10 (21 aa).

It belongs to the universal ribosomal protein uL10 family. Part of the ribosomal stalk of the 50S ribosomal subunit. The N-terminus interacts with L11 and the large rRNA to form the base of the stalk. The C-terminus forms an elongated spine to which L12 dimers bind in a sequential fashion forming a multimeric L10(L12)X complex.

In terms of biological role, forms part of the ribosomal stalk, playing a central role in the interaction of the ribosome with GTP-bound translation factors. This Proteus vulgaris protein is Large ribosomal subunit protein uL10 (rplJ).